Reading from the N-terminus, the 145-residue chain is 3-dehydroquinate dehydratase (145 aa).

The active-site Proton acceptor is Tyr-23. 3 residues coordinate substrate: Asn-74, His-80, and Asp-87. His-100 serves as the catalytic Proton donor. Substrate contacts are provided by residues 101–102 and Arg-111; that span reads LS.

This sequence belongs to the type-II 3-dehydroquinase family. In terms of assembly, homododecamer.

The catalysed reaction is 3-dehydroquinate = 3-dehydroshikimate + H2O. It participates in metabolic intermediate biosynthesis; chorismate biosynthesis; chorismate from D-erythrose 4-phosphate and phosphoenolpyruvate: step 3/7. Its function is as follows. Catalyzes a trans-dehydration via an enolate intermediate. This chain is 3-dehydroquinate dehydratase, found in Bacillus licheniformis (strain ATCC 14580 / DSM 13 / JCM 2505 / CCUG 7422 / NBRC 12200 / NCIMB 9375 / NCTC 10341 / NRRL NRS-1264 / Gibson 46).